The primary structure comprises 297 residues: GTPase Era (297 aa).

An Era-type G domain is found at 7–174 (RSGFVSIVGR…VQLVHGLLPE (168 aa)). The interval 15 to 22 (GRPNVGKS) is G1. 15-22 (GRPNVGKS) contacts GTP. The interval 41 to 45 (QTTRN) is G2. A G3 region spans residues 62–65 (DTPG). Residues 62–66 (DTPGI) and 124–127 (NKID) each bind GTP. A G4 region spans residues 124-127 (NKID). Residues 153-155 (VSA) are G5. One can recognise a KH type-2 domain in the interval 205–282 (THDEVPYSTA…FLELFVRVSG (78 aa)).

This sequence belongs to the TRAFAC class TrmE-Era-EngA-EngB-Septin-like GTPase superfamily. Era GTPase family. As to quaternary structure, monomer.

It localises to the cytoplasm. It is found in the cell inner membrane. Functionally, an essential GTPase that binds both GDP and GTP, with rapid nucleotide exchange. Plays a role in 16S rRNA processing and 30S ribosomal subunit biogenesis and possibly also in cell cycle regulation and energy metabolism. This Geobacter sp. (strain M21) protein is GTPase Era.